A 183-amino-acid polypeptide reads, in one-letter code: Acireductone dioxygenase (183 aa).

Residues H95, H97, E101, and H139 each contribute to the Fe(2+) site. Positions 95, 97, 101, and 139 each coordinate Ni(2+).

Belongs to the acireductone dioxygenase (ARD) family. In terms of assembly, monomer. Fe(2+) is required as a cofactor. It depends on Ni(2+) as a cofactor.

The enzyme catalyses 1,2-dihydroxy-5-(methylsulfanyl)pent-1-en-3-one + O2 = 3-(methylsulfanyl)propanoate + CO + formate + 2 H(+). It catalyses the reaction 1,2-dihydroxy-5-(methylsulfanyl)pent-1-en-3-one + O2 = 4-methylsulfanyl-2-oxobutanoate + formate + 2 H(+). The protein operates within amino-acid biosynthesis; L-methionine biosynthesis via salvage pathway; L-methionine from S-methyl-5-thio-alpha-D-ribose 1-phosphate: step 5/6. Catalyzes 2 different reactions between oxygen and the acireductone 1,2-dihydroxy-3-keto-5-methylthiopentene (DHK-MTPene) depending upon the metal bound in the active site. Fe-containing acireductone dioxygenase (Fe-ARD) produces formate and 2-keto-4-methylthiobutyrate (KMTB), the alpha-ketoacid precursor of methionine in the methionine recycle pathway. Ni-containing acireductone dioxygenase (Ni-ARD) produces methylthiopropionate, carbon monoxide and formate, and does not lie on the methionine recycle pathway. The polypeptide is Acireductone dioxygenase (Aquifex aeolicus (strain VF5)).